Here is a 1219-residue protein sequence, read N- to C-terminus: DNA ligase 4 (1219 aa).

Residues E251, K253, R258, R273, E303, F342, E418, K423, R434, K440, and K442 each contribute to the ATP site. The N6-AMP-lysine intermediate role is filled by K253. E303 contacts Mg(2+). E418 contacts Mg(2+). Residues 604 to 632 form a disordered region; the sequence is NGTTQKQKESESTQDNPKVNKSSKRGEKK. 2 consecutive BRCT domains span residues 651–739 and 807–909; these read GKTS…PKYF and VYFY…VYTL. Disordered stretches follow at residues 914–1126 and 1146–1197; these read MEES…MDMK and IPSQ…SDVV. Residues 932-960 are compositionally biased toward polar residues; sequence VASQGSAQTKEPASSKIAITSSRGRSNTR. The segment covering 1042 to 1051 has biased composition (basic residues); that stretch reads QRSRRGKKAA. Acidic residues predominate over residues 1056-1065; sequence DESDENDELD. 2 stretches are compositionally biased toward basic and acidic residues: residues 1084–1096 and 1117–1126; these read VENE…DIAK and RNAKTEMDMK. Residues 1148–1159 are compositionally biased toward polar residues; sequence SQKTTETSNRTT.

This sequence belongs to the ATP-dependent DNA ligase family. Interacts with XRCC4 via its tandem BRCT domains. Interacts with POLL. Mg(2+) serves as cofactor. Widely expressed, with higher levels in young flowers and roots.

The protein localises to the nucleus. The catalysed reaction is ATP + (deoxyribonucleotide)n-3'-hydroxyl + 5'-phospho-(deoxyribonucleotide)m = (deoxyribonucleotide)n+m + AMP + diphosphate.. Its function is as follows. DNA ligase involved in DNA non-homologous end joining (NHEJ); required for double-strand break (DSB) repair. May be involved for T-DNA integration even if not absolutely required. Seems to be dispensable under normal growth conditions. This is DNA ligase 4 (LIG4) from Arabidopsis thaliana (Mouse-ear cress).